Here is a 917-residue protein sequence, read N- to C-terminus: Methionine--tRNA ligase, cytoplasmic (917 aa).

The short motif at 44-54 is the 'HIGH' region element; the sequence is PYVNNVPHLGN. The 'KMSKS' region signature appears at 367-371; that stretch reads KFSKS. Lysine 370 serves as a coordination point for ATP. Disordered regions lie at residues 591–623 and 702–749; these read GSQD…GDKK and SCTP…AAAA. Residues 614–623 are compositionally biased toward basic and acidic residues; it reads PTKDKKGDKK. Residues 702 to 713 show a composition bias toward low complexity; it reads SCTPTPTSTPAS. Residues 732 to 741 show a composition bias toward basic and acidic residues; that stretch reads EPKKAKEQKK. The 102-residue stretch at 756–857 folds into the tRNA-binding domain; that stretch reads DVGRLDMRVG…ADSKPGTPVV (102 aa).

The protein belongs to the class-I aminoacyl-tRNA synthetase family.

It localises to the cytoplasm. It catalyses the reaction tRNA(Met) + L-methionine + ATP = L-methionyl-tRNA(Met) + AMP + diphosphate. In Caenorhabditis elegans, this protein is Methionine--tRNA ligase, cytoplasmic.